Reading from the N-terminus, the 302-residue chain is Nucleotide-binding protein Bmul_0520/BMULJ_02739 (302 aa).

8 to 15 (GISGSGKS) contributes to the ATP binding site. 57–60 (DARS) is a GTP binding site.

This sequence belongs to the RapZ-like family.

Displays ATPase and GTPase activities. This is Nucleotide-binding protein Bmul_0520/BMULJ_02739 from Burkholderia multivorans (strain ATCC 17616 / 249).